The primary structure comprises 161 residues: uncharacterized protein (161 aa).

This is an uncharacterized protein from Acidianus convivator (ATV).